Here is a 376-residue protein sequence, read N- to C-terminus: N6-methyladenosine RNA methyltransferase MTA1 (376 aa).

Positions 53–78 (TRRLISSPPPETPFVTPEPKNGPSPL) are disordered.

The protein belongs to the MT-A70-like family.

It catalyses the reaction an adenosine in mRNA + S-adenosyl-L-methionine = an N(6)-methyladenosine in mRNA + S-adenosyl-L-homocysteine + H(+). N6-methyladenosine RNA methyltransferase that plays a crucial role in fungal phenotypic traits, virulence, and stress tolerance. Mediates the methylation of mRNAs to produce N6-methyladenosine (m6A)-containing mRNAs. M6A is a modification present at internal sites of mRNAs and some non-coding RNAs and plays a role in mRNA stability and processing. Required for appressorium turgor pressure and regulates autophagosome formation during appressorium formation stage. Specifically, mediates the stability of ATG8 mRNA in a m6A-dependent manner via modification of the m6A site A982 located in 3'UTR region. The polypeptide is N6-methyladenosine RNA methyltransferase MTA1 (Pyricularia oryzae (strain 70-15 / ATCC MYA-4617 / FGSC 8958) (Rice blast fungus)).